A 303-amino-acid chain; its full sequence is N-acetyl-D-glucosamine kinase (303 aa).

Residues 4–11 (GFDIGGSK) and 133–140 (GVGGGLIV) each bind ATP. Positions 157, 177, 179, and 184 each coordinate Zn(2+).

It belongs to the ROK (NagC/XylR) family. NagK subfamily.

It catalyses the reaction N-acetyl-D-glucosamine + ATP = N-acetyl-D-glucosamine 6-phosphate + ADP + H(+). Its pathway is cell wall biogenesis; peptidoglycan recycling. Catalyzes the phosphorylation of N-acetyl-D-glucosamine (GlcNAc) derived from cell-wall degradation, yielding GlcNAc-6-P. This Erwinia tasmaniensis (strain DSM 17950 / CFBP 7177 / CIP 109463 / NCPPB 4357 / Et1/99) protein is N-acetyl-D-glucosamine kinase.